The primary structure comprises 121 residues: Large ribosomal subunit protein uL22 (121 aa).

This sequence belongs to the universal ribosomal protein uL22 family. In terms of assembly, part of the 50S ribosomal subunit.

Functionally, this protein binds specifically to 23S rRNA; its binding is stimulated by other ribosomal proteins, e.g. L4, L17, and L20. It is important during the early stages of 50S assembly. It makes multiple contacts with different domains of the 23S rRNA in the assembled 50S subunit and ribosome. The globular domain of the protein is located near the polypeptide exit tunnel on the outside of the subunit, while an extended beta-hairpin is found that lines the wall of the exit tunnel in the center of the 70S ribosome. In Synechococcus sp. (strain CC9902), this protein is Large ribosomal subunit protein uL22.